The sequence spans 301 residues: uncharacterized protein (301 aa).

3 residues coordinate a divalent metal cation: E146, E148, and D177.

This sequence belongs to the FAH family.

This is an uncharacterized protein from Staphylococcus haemolyticus (strain JCSC1435).